A 1576-amino-acid chain; its full sequence is ABC transporter ALT5 (1576 aa).

A run of 10 helical transmembrane segments spans residues 27 to 47 (LKFE…ILAV), 72 to 92 (ILGF…TQGT), 99 to 119 (GLFL…VIVC), 267 to 287 (LPLS…PILP), 289 to 309 (LVLI…TGFL), 321 to 341 (GLIG…SLYW), 387 to 407 (VLAG…AVIV), 417 to 437 (GFFA…ATVG), 500 to 520 (ITAM…TLAA), and 525 to 545 (VATS…APLG). In terms of domain architecture, ABC transmembrane type-1 1 spans 289–556 (LVLIGLSISQ…LFQSVAPLMS (268 aa)). In terms of domain architecture, ABC transporter 1 spans 602–834 (FRVVNGSFRW…NGGYLQSLCV (233 aa)). ATP is bound at residue 636 to 643 (GPVGSGKS). 7 consecutive transmembrane segments (helical) span residues 915-935 (VVAL…FAFP), 957-977 (FWVG…FLTM), 981-1001 (VTSI…AAIM), 1035-1054 (LIQF…VLAA), 1060-1078 (AAMY…KLYL), 1142-1162 (WLLF…VTLV), and 1171-1191 (GFAG…ASAM). In terms of domain architecture, ABC transmembrane type-1 2 spans 919–1199 (VAFLASAICY…AMQSYAKLET (281 aa)). The region spanning 1236–1567 (IKLDGVSASY…SHSKFRALCE (332 aa)) is the ABC transporter 2 domain. 1278-1285 (GRSGSGKS) contacts ATP.

This sequence belongs to the ABC transporter superfamily. ABCC family. Conjugate transporter (TC 3.A.1.208) subfamily.

The protein localises to the cell membrane. In terms of biological role, ABC transporter that may provide the dual role AAL-toxin export and self-protection by allowing the fungus to evade the harmful effect of its own AAL-toxin production. This Alternaria alternata (Alternaria rot fungus) protein is ABC transporter ALT5.